A 257-amino-acid chain; its full sequence is TLC domain-containing protein 3A (257 aa).

The next 7 helical transmembrane spans lie at 1–21, 42–62, 71–91, 114–134, 142–162, 181–201, and 220–240; these read MLLTLASGALFFPGLFALSIW, LVSSVQAVLATWAGLTVIISC, WLATEYVWFLIPYMIYDFYAM, LIENRLMVTHHTVILLFLVPI, LGDFFVGCIFTAELSTPFVSL, GILTVTTFLFCRILLFPFMYW, and LHCNMANAVLISPQLYWFSLL. The TLC domain maps to 33 to 249; that stretch reads DDCLTVGTRL…LCKKAARLFD (217 aa).

In terms of assembly, interacts with GGT7 isoform 3 and SLC3A2.

The protein resides in the cell membrane. This chain is TLC domain-containing protein 3A (Tlcd3a), found in Mus musculus (Mouse).